The chain runs to 233 residues: uncharacterized protein (233 aa).

Disordered regions lie at residues 1 to 159 and 181 to 206; these read MGKH…NEKL and MGVK…QDKM. Residues 36–115 show a composition bias toward basic and acidic residues; the sequence is RDRSRSPHKE…RRDDKNRLSA (80 aa). The segment covering 135 to 148 has biased composition (low complexity); the sequence is SSSSNTTDTASSSS. Residues 189–206 are compositionally biased toward basic and acidic residues; that stretch reads PTDDSSRLSDEKNRQDKM.

This is an uncharacterized protein from Caenorhabditis elegans.